A 552-amino-acid chain; its full sequence is 3-hydroxy-3-methylglutaryl-coenzyme A reductase 1 (552 aa).

2 stretches are compositionally biased toward low complexity: residues 79 to 99 (QHNQ…QQPQ) and 112 to 122 (QQQQQQQQQQQ). The interval 79–138 (QHNQQQQQKQQPSQDYIQQPQNDNNINSGKEQEQQQQQQQQQQQTPDITNQPTKTNKKIP) is disordered. Positions 123–132 (TPDITNQPTK) are enriched in polar residues. Glu-237 functions as the Charge relay system in the catalytic mechanism. A glycan (N-linked (GlcNAc...) asparagine) is linked at Asn-288. Lys-369 (charge relay system) is an active-site residue. Asn-375 carries N-linked (GlcNAc...) asparagine glycosylation. Asp-445 (charge relay system) is an active-site residue. His-543 serves as the catalytic Proton donor.

Belongs to the HMG-CoA reductase family.

Its subcellular location is the endoplasmic reticulum membrane. The catalysed reaction is (R)-mevalonate + 2 NADP(+) + CoA = (3S)-3-hydroxy-3-methylglutaryl-CoA + 2 NADPH + 2 H(+). Its pathway is metabolic intermediate biosynthesis; (R)-mevalonate biosynthesis; (R)-mevalonate from acetyl-CoA: step 3/3. Functionally, this transmembrane glycoprotein is involved in the control of cholesterol biosynthesis. It is the rate-limiting enzyme of the sterol biosynthesis. The sequence is that of 3-hydroxy-3-methylglutaryl-coenzyme A reductase 1 (hmgA) from Dictyostelium discoideum (Social amoeba).